The sequence spans 66 residues: Toxin Cll1 (66 aa).

An LCN-type CS-alpha/beta domain is found at 1 to 66 (KEGYLVNKST…TYPLPNKSCS (66 aa)). Cystine bridges form between Cys-12–Cys-65, Cys-16–Cys-41, Cys-25–Cys-46, and Cys-29–Cys-48.

Belongs to the long (4 C-C) scorpion toxin superfamily. Sodium channel inhibitor family. Beta subfamily. As to expression, expressed by the venom gland.

The protein resides in the secreted. In terms of biological role, beta toxin that binds site-4 of sodium channels (Nav) and reduces peak current (observed on Nav1.1/SCN1A, Nav1.2/SCN2A, Nav1.3/SCN3A, Nav1.4/SCN5A, Nav1.5/SCN4A, and Nav1.6/SCN8A (IC(50)=44.9 nM)), shifts the voltage of activation toward more negative potentials (observed on Nav1.6, Nav1.1 (weak), Nav1.2 (weak), and Nav1.7 (weak)), and induces resurgent currents at negative voltages following brief and strong depolarizations (observed on Nav1.6, Nav1.1 (weak), Nav1.2 (weak), and Nav1.4 (weak)). This toxin is only active on crustaceans. This Centruroides limpidus (Mexican scorpion) protein is Toxin Cll1.